The primary structure comprises 340 residues: Probable sugar phosphate/phosphate translocator At3g14410 (340 aa).

10 helical membrane passes run 12-32 (EFVT…QIFF), 44-64 (FPYP…LCFL), 80-100 (LEIY…TLWL), 110-130 (VAFA…LGVA), 141-161 (LLIM…ELNI), 163-183 (WIGV…LIFM), 197-217 (ISLM…PWIF), 234-254 (VVLT…FLVI), 260-282 (LTIR…LLFA), and 286-305 (LTII…AAYN). Residues 320–340 (ETPGDAESIPLVSQGNTNTER) are disordered. The span at 330–340 (LVSQGNTNTER) shows a compositional bias: polar residues.

This sequence belongs to the TPT transporter family. TPT (TC 2.A.7.9) subfamily.

It localises to the membrane. This chain is Probable sugar phosphate/phosphate translocator At3g14410, found in Arabidopsis thaliana (Mouse-ear cress).